The sequence spans 310 residues: Lipoyl synthase (310 aa).

The [4Fe-4S] cluster site is built by cysteine 51, cysteine 56, cysteine 62, cysteine 77, cysteine 81, cysteine 84, and serine 290. A Radical SAM core domain is found at 63–280 (WSRKTATYLA…RRVGESLGLF (218 aa)).

This sequence belongs to the radical SAM superfamily. Lipoyl synthase family. It depends on [4Fe-4S] cluster as a cofactor.

The protein localises to the cytoplasm. The catalysed reaction is [[Fe-S] cluster scaffold protein carrying a second [4Fe-4S](2+) cluster] + N(6)-octanoyl-L-lysyl-[protein] + 2 oxidized [2Fe-2S]-[ferredoxin] + 2 S-adenosyl-L-methionine + 4 H(+) = [[Fe-S] cluster scaffold protein] + N(6)-[(R)-dihydrolipoyl]-L-lysyl-[protein] + 4 Fe(3+) + 2 hydrogen sulfide + 2 5'-deoxyadenosine + 2 L-methionine + 2 reduced [2Fe-2S]-[ferredoxin]. Its pathway is protein modification; protein lipoylation via endogenous pathway; protein N(6)-(lipoyl)lysine from octanoyl-[acyl-carrier-protein]: step 2/2. Catalyzes the radical-mediated insertion of two sulfur atoms into the C-6 and C-8 positions of the octanoyl moiety bound to the lipoyl domains of lipoate-dependent enzymes, thereby converting the octanoylated domains into lipoylated derivatives. The chain is Lipoyl synthase from Chlamydia abortus (strain DSM 27085 / S26/3) (Chlamydophila abortus).